The chain runs to 358 residues: MSLDLKMQDKFTWVLEKFSSLKDQCYSPVFTVAGCNWRLLSFLKGAKNDRYFSVYLDLEPGSLPPGWRREVKFSITLDNVCPNTDRVLGGPCFFDAKSNIWGFQDFLLLEKLVNIAEGFLVNDRLTIVAEVDVLPSITRLHLVLEDASRGRDPNTVACVTETCDYVLMEIQSDKETVDINGFVVVSSKAESVRRILERHPDISVEFRGKNQQLRNACMNFLLSLIETMCQSLEELSNEDLVEADVALTYLRDAGFKVDWLEKKLDQLKEKKEEEMSGLARLHEIEERLQKLKLLFVDLESQLQKEKVEALVARAPLSFNDGVCRFSGFCGFVGESLFSYAWKQGPSLYSLSFMSNGTE.

One can recognise an MATH domain in the interval 8–131; the sequence is QDKFTWVLEK…NDRLTIVAEV (124 aa). The stretch at 250-309 forms a coiled coil; sequence LRDAGFKVDWLEKKLDQLKEKKEEEMSGLARLHEIEERLQKLKLLFVDLESQLQKEKVEA.

The chain is MATH domain and coiled-coil domain-containing protein At3g58440 from Arabidopsis thaliana (Mouse-ear cress).